The following is an 80-amino-acid chain: Serine palmitoyltransferase small subunit A-A (80 aa).

Residues 1 to 21 are Cytoplasmic-facing; that stretch reads MKVLCEDVNGPRSSLGRAWSH. A helical transmembrane segment spans residues 22-38; sequence MSWLYYQYLLVTALYML. Residues 39 to 43 are Lumenal-facing; the sequence is EPWER. The chain crosses the membrane as a helical span at residues 44–66; it reads TVFNSMLVSIVGMALYTGYIFMP. Residues 67 to 80 are Cytoplasmic-facing; sequence QHILAILHYFEIVQ.

The protein belongs to the SPTSS family. SPTSSA subfamily. As to quaternary structure, component of the serine palmitoyltransferase (SPT) complex, which is composed of SPTLC1, SPTLC2 or SPTLC3 and SPTSSA or SPTSSB. The heterodimer consisting of SPTLC1 and SPTLC2/SPTLC3 forms the catalytic core of the enzyme, while SPTSSA or SPTSSB subunits determine substrate specificity. SPT also interacts with ORMDL proteins, especially ORMDL3, which negatively regulate SPT activity in the presence of ceramides.

The protein resides in the endoplasmic reticulum membrane. Its pathway is lipid metabolism; sphingolipid metabolism. Functionally, component of the serine palmitoyltransferase multisubunit enzyme (SPT) that catalyzes the initial and rate-limiting step in sphingolipid biosynthesis by condensing L-serine and activated acyl-CoA (most commonly palmitoyl-CoA) to form long-chain bases. The SPT complex is composed of SPTLC1, SPTLC2 or SPTLC3 and SPTSSA or SPTSSB. Within this complex, the heterodimer consisting of SPTLC1 and SPTLC2/SPTLC3 forms the catalytic core. Within the SPT complex, SPTSSA stimulates the catalytic activity and plays a role in substrate specificity, which depends upon the overall complex composition. The SPTLC1-SPTLC2-SPTSSA complex shows a strong preference for C16-CoA substrate, while the SPTLC1-SPTLC3-SPTSSA isozyme uses both C14-CoA and C16-CoA as substrates, with a slight preference for C14-CoA. Independently of its action as a SPT component, may be involved in MBOAT7 localization to mitochondria-associated membranes, a membrane bridge between the endoplasmic reticulum and mitochondria, may hence affect MBOAT7-catalyzed incorporation of arachidonic acid into phosphatidylinositol. In Xenopus laevis (African clawed frog), this protein is Serine palmitoyltransferase small subunit A-A (sptssa-a).